Here is a 330-residue protein sequence, read N- to C-terminus: Phosphate acyltransferase (330 aa).

This sequence belongs to the PlsX family. As to quaternary structure, homodimer. Probably interacts with PlsY.

Its subcellular location is the cytoplasm. The catalysed reaction is a fatty acyl-[ACP] + phosphate = an acyl phosphate + holo-[ACP]. It functions in the pathway lipid metabolism; phospholipid metabolism. Catalyzes the reversible formation of acyl-phosphate (acyl-PO(4)) from acyl-[acyl-carrier-protein] (acyl-ACP). This enzyme utilizes acyl-ACP as fatty acyl donor, but not acyl-CoA. The protein is Phosphate acyltransferase of Streptococcus pneumoniae serotype 2 (strain D39 / NCTC 7466).